A 272-amino-acid chain; its full sequence is Hemin import ATP-binding protein HmuV (272 aa).

The 254-residue stretch at 2 to 255 (LNAEHLHVAR…DLIERCYGFR (254 aa)) folds into the ABC transporter domain. 34–41 (GRNGAGKS) lines the ATP pocket.

Belongs to the ABC transporter superfamily. Heme (hemin) importer (TC 3.A.1.14.5) family. As to quaternary structure, the complex is composed of two ATP-binding proteins (HmuV), two transmembrane proteins (HmuU) and a solute-binding protein (HmuT).

It is found in the cell inner membrane. Its function is as follows. Part of the ABC transporter complex HmuTUV involved in hemin import. Responsible for energy coupling to the transport system. This is Hemin import ATP-binding protein HmuV from Burkholderia thailandensis (strain ATCC 700388 / DSM 13276 / CCUG 48851 / CIP 106301 / E264).